A 433-amino-acid chain; its full sequence is MELTLKLLVLLLFILNHHVGSGSIVKFLPGFEGPLPFELETGYIGIGEEEEVQLFYYFIKSERNPKEDPLLLWLSGGPGCSSITGLLFQNGPLALKSEVYNGSVPSLVSTTYSWTKTANIIFLDQPVGAGFSYSRAPLIDTPTDTGEVKRIHEFLQKWLSKHPQFSSNHFYAGGDSYSGMIVPALVQEISKGNYICCNPPINLKGYVLGNPITHEDDPNYRIPFSHGMALISDELYESIREACKGNYFNVDPRNTKCLKLVEEFHKCTDKLNEFHILSPDCDTASPDCYLYPFYLISFWANDESVRDALHVNKRSIGKWERCNYLSKPYNKDIKSSVPYHMNNSVSGYRSLIYSGDHDLVVPFLATQAWIKSLNYSIIDEWRPWMIRDQITGYTRTYSNKMTFATVKGSGHTAENKPQESFIMFRRWINGQPL.

The first 21 residues, 1-21 (MELTLKLLVLLLFILNHHVGS), serve as a signal peptide directing secretion. 3 disulfides stabilise this stretch: Cys80–Cys322, Cys243–Cys257, and Cys281–Cys288. Asn101 carries an N-linked (GlcNAc...) asparagine glycan. Ser176 is a catalytic residue. N-linked (GlcNAc...) asparagine glycosylation is present at Asn342. The active site involves Asp358. Asn374 is a glycosylation site (N-linked (GlcNAc...) asparagine). His411 is a catalytic residue.

This sequence belongs to the peptidase S10 family. In terms of tissue distribution, ubiquitous.

It localises to the secreted. Functionally, probable carboxypeptidase. The sequence is that of Serine carboxypeptidase-like 11 (SCPL11) from Arabidopsis thaliana (Mouse-ear cress).